The primary structure comprises 469 residues: Protein RUFY3 (469 aa).

2 positions are modified to phosphothreonine: threonine 5 and threonine 12. Residues tyrosine 27, serine 34, and serine 49 each carry the phosphoserine modification. Residue threonine 51 is modified to Phosphothreonine. Aspartate 53 carries the phosphoserine modification. In terms of domain architecture, RUN spans 95–227 (DSDYAPLQQF…IDANFCMKGE (133 aa)). Coiled-coil stretches lie at residues 271–362 (NRHL…VEKE) and 422–463 (KSEL…AANK). Residues 321–337 (SYLLESNRKGPKQDRTA) are compositionally biased toward basic and acidic residues. Positions 321–342 (SYLLESNRKGPKQDRTAEGQAL) are disordered.

In terms of assembly, interacts with PAK1. Interacts (via C-terminus) with Ras-related Rab-5 proteins. Interacts (via C-terminus) with Ras-related Rap-2 proteins. Interacts with PIK3CA and PIK3R1. Interacts (via N-terminus) with FSCN1; this interaction induces neuron axon development. Interacts with DBN1. Interacts (via the second coiled coil) with GTP-, but not GDP-bound ARL8A and ARL8B. Interacts with dynactin/DCTN1 and the dynein intermediate chain DYNC1I1/2. Directly interacts with DYNC1LI1. Post-translationally, phosphorylated by PAK1. Isoform 1 is partially phosphorylated. In terms of tissue distribution, expressed in brain (at protein level).

Its subcellular location is the cytoplasm. The protein localises to the endomembrane system. The protein resides in the cell projection. It localises to the invadopodium. It is found in the growth cone. Its subcellular location is the perikaryon. The protein localises to the filopodium. The protein resides in the lamellipodium. It localises to the lysosome. In terms of biological role, ARL8 effector that promotes the coupling of endolysosomes to dynein-dynactin for retrograde transport along microtubules. Acts by binding both GTP-bound ARL8 and dynein-dynactin. In nonneuronal cells, promotes concentration of endolysosomes in the juxtanuclear area. In hippocampal neurons, drives retrograde transport of endolysosomes from the axon to the soma. Plays a role in the generation of neuronal polarity formation and axon growth. Implicated in the formation of a single axon by developing neurons. May inhibit the formation of additional axons by inhibition of PI3K in minor neuronal processes. Plays a role in the formation of F-actin-enriched protrusive structures at the cell periphery. Plays a role in cytoskeletal organization by regulating the subcellular localization of FSCN1 and DBN1 at axonal growth cones. The sequence is that of Protein RUFY3 from Mus musculus (Mouse).